Reading from the N-terminus, the 984-residue chain is Rhoptry neck protein 4 (984 aa).

Positions 1-26 are cleaved as a signal peptide; the sequence is MAIKNTLTGSGLLVLLTLACGTTVQS. Residues 24 to 300 form a disordered region; sequence VQSSPPTPAP…TPIPASKGIY (277 aa). 2 stretches are compositionally biased toward polar residues: residues 66–85 and 92–105; these read PQKT…NSKV and SDTT…TSES. Asn-81 carries an N-linked (GlcNAc...) asparagine glycan. Residues 106-117 are compositionally biased toward pro residues; the sequence is PPVPQLGTPPRP. Repeat unit 1 spans residues 129 to 172; sequence QPPTAAPRTSRSVDTGSGSDASTEQQAGGQKVVTPIPASKGIYP. The segment covering 135-156 has biased composition (polar residues); the sequence is PRTSRSVDTGSGSDASTEQQAG. Residues 214–228 are compositionally biased toward basic residues; the sequence is TGRRRAKARNRKRHP. The segment covering 242–285 has biased composition (polar residues); sequence QPPTTASRPSNGEGESQPPTAAPRTSRSVDTGSGSDASTEQQAG. Repeat unit 2 spans residues 258–301; it reads QPPTAAPRTSRSVDTGSGSDASTEQQAGGQKVVTPIPASKGIYP. N-linked (GlcNAc...) asparagine glycosylation is found at Asn-390 and Asn-780. A disordered region spans residues 882-984; that stretch reads GPTVSDESRR…EESTSKTSEL (103 aa). Basic residues predominate over residues 892-901; sequence MIHPVRHRSR. Residues 902-914 show a composition bias toward low complexity; the sequence is TAPSSEAASTAAE. Asn-925 is a glycosylation site (N-linked (GlcNAc...) asparagine). Over residues 967–984 the composition is skewed to polar residues; sequence LKQSDTLIEESTSKTSEL.

It localises to the secreted. It is found in the parasitophorous vacuole membrane. The polypeptide is Rhoptry neck protein 4 (RON4) (Toxoplasma gondii).